We begin with the raw amino-acid sequence, 207 residues long: Dephospho-CoA kinase (207 aa).

One can recognise a DPCK domain in the interval 10–207; sequence ILGLTGGIGS…FYLTLRGGQP (198 aa). 18–23 contacts ATP; it reads GSGKSA.

This sequence belongs to the CoaE family.

The protein resides in the cytoplasm. It catalyses the reaction 3'-dephospho-CoA + ATP = ADP + CoA + H(+). It participates in cofactor biosynthesis; coenzyme A biosynthesis; CoA from (R)-pantothenate: step 5/5. Functionally, catalyzes the phosphorylation of the 3'-hydroxyl group of dephosphocoenzyme A to form coenzyme A. The chain is Dephospho-CoA kinase from Pseudomonas putida (Arthrobacter siderocapsulatus).